We begin with the raw amino-acid sequence, 142 residues long: Large ribosomal subunit protein uL13 (142 aa).

The protein belongs to the universal ribosomal protein uL13 family. In terms of assembly, part of the 50S ribosomal subunit.

Functionally, this protein is one of the early assembly proteins of the 50S ribosomal subunit, although it is not seen to bind rRNA by itself. It is important during the early stages of 50S assembly. In Vibrio campbellii (strain ATCC BAA-1116), this protein is Large ribosomal subunit protein uL13.